A 213-amino-acid chain; its full sequence is Probable lipid phosphate phosphatase beta (213 aa).

A run of 5 helical transmembrane segments spans residues 30-50, 67-87, 118-138, 158-178, and 181-201; these read PFLP…RFSF, VPFL…KLIF, VFFV…SMTG, VEVV…RILL, and HYVL…LFAL.

Belongs to the PA-phosphatase related phosphoesterase family.

It localises to the membrane. This chain is Probable lipid phosphate phosphatase beta (LPPB), found in Arabidopsis thaliana (Mouse-ear cress).